Consider the following 599-residue polypeptide: Translation initiation factor IF-2 (599 aa).

The region spanning 111 to 278 (PRPPIITVMG…SILLLAEILE (168 aa)) is the tr-type G domain. Positions 120–127 (GHVDHGKT) are G1. Position 120–127 (120–127 (GHVDHGKT)) interacts with GTP. Positions 145 to 149 (GITQH) are G2. Positions 166 to 169 (DTPG) are G3. Residues 166-170 (DTPGH) and 220-223 (NKMD) contribute to the GTP site. The segment at 220–223 (NKMD) is G4. The tract at residues 256 to 258 (SAL) is G5.

The protein belongs to the TRAFAC class translation factor GTPase superfamily. Classic translation factor GTPase family. IF-2 subfamily.

It is found in the cytoplasm. Its function is as follows. One of the essential components for the initiation of protein synthesis. Protects formylmethionyl-tRNA from spontaneous hydrolysis and promotes its binding to the 30S ribosomal subunits. Also involved in the hydrolysis of GTP during the formation of the 70S ribosomal complex. This is Translation initiation factor IF-2 from Mesomycoplasma hyopneumoniae (strain 232) (Mycoplasma hyopneumoniae).